Consider the following 165-residue polypeptide: Ubiquitin-fold modifier-conjugating enzyme 1 (165 aa).

The Glycyl thioester intermediate role is filled by cysteine 116.

The protein belongs to the ubiquitin-conjugating enzyme family. UFC1 subfamily.

In terms of biological role, E2-like enzyme which forms an intermediate with UFM1 via a thioester linkage. This Drosophila virilis (Fruit fly) protein is Ubiquitin-fold modifier-conjugating enzyme 1.